The primary structure comprises 1274 residues: DENN domain-containing protein 3 (1274 aa).

Positions 65–108 (GQVPGASCALGKGRRRSFRKKREKPRMEPWKSHPGDSKGPDSED) are disordered. A uDENN domain is found at 75–245 (GKGRRRSFRK…LIPSPPPGPL (171 aa)). Residues 76–88 (KGRRRSFRKKREK) show a composition bias toward basic residues. Residues 89-105 (PRMEPWKSHPGDSKGPD) show a composition bias toward basic and acidic residues. The cDENN domain occupies 268 to 400 (IVDLDLHLPL…PLLLAQTFIQ (133 aa)). Residues 402–506 (VQSLQLHPDL…KARLNGRMDA (105 aa)) form the dDENN domain. The tract at residues 520-970 (RIDRMLISPR…KHKINPSAGE (451 aa)) is linker. Serine 554 and serine 572 each carry phosphoserine; by ULK1. The residue at position 940 (tyrosine 940) is a Phosphotyrosine. WD repeat units follow at residues 975–1013 (AIEVLLYTPGRLDPAEKVEDAHPKLWCALNEGKVVVFDA), 1019–1055 (HQHCFKVGSSKVNCMVMAEHNQVWVGSEDSVIYIINV), 1059–1099 (SCNK…AWNV), 1103–1140 (RVISRFQLSYGDLLSISLHNDRIWCCTVHKILVVTPQG), 1146–1181 (LKHPKDASFLAFQLLPEEQQLWAASTGVSELYMWSL), 1186–1228 (QPPQ…IYVM), and 1234–1273 (TVEKELVAHLDTVRTLCSAEDRYVLSGAGQEEGKIAIWKV).

Forms oligomers. Interacts with 6 of the 7 known isoforms of 14-3-3 proteins.

The protein resides in the cytoplasm. Its function is as follows. Guanine nucleotide exchange factor (GEF) activating Rab12. Promotes the exchange of GDP to GTP, converting inactive GDP-bound Rab12 into its active GTP-bound form. Regulates autophagy in response to starvation through Rab12 activation. Starvation leads to ULK1/2-dependent phosphorylation of Ser-554 and Ser-572, which in turn allows recruitment of 14-3-3 adapter proteins and leads to up-regulation of GEF activity towards Rab12. Also plays a role in protein transport from recycling endosomes to lysosomes, regulating, for instance, the degradation of the transferrin receptor and of the amino acid transporter PAT4. Starvation also induces phosphorylation at Tyr-940, which leads to up-regulated GEF activity and initiates autophagy. This chain is DENN domain-containing protein 3 (Dennd3), found in Mus musculus (Mouse).